Consider the following 517-residue polypeptide: Pentatricopeptide repeat-containing protein At1g77360, mitochondrial (517 aa).

Residues 1-59 (MKRFRIRSVDFRQLVNFFSFMRWECSSSATVWVRFNMTIRIINRQSRFCCKSFLSARLY) constitute a mitochondrion transit peptide. PPR repeat units lie at residues 133-163 (SVRA…MRKK), 167-201 (NVET…DLPP), 202-232 (NLVA…MRDR), 236-270 (DSKT…GCHP), 271-305 (DIVT…ICKP), 306-340 (TTFI…GMKA), 341-375 (DVAV…GVTP), 376-406 (NSKS…MIKV), 410-444 (DADT…GVFP), and 445-479 (SMHT…GIRP).

Belongs to the PPR family. P subfamily.

It is found in the mitochondrion. The polypeptide is Pentatricopeptide repeat-containing protein At1g77360, mitochondrial (Arabidopsis thaliana (Mouse-ear cress)).